A 650-amino-acid chain; its full sequence is uncharacterized protein (650 aa).

It belongs to the MG032/MG096/MG288 family.

This is an uncharacterized protein from Mycoplasma genitalium (strain ATCC 33530 / DSM 19775 / NCTC 10195 / G37) (Mycoplasmoides genitalium).